The primary structure comprises 793 residues: Outer membrane protein assembly factor BamA (793 aa).

The N-terminal stretch at 1–19 (MKKLLIASLLFGTTTTVFA) is a signal peptide. 5 POTRA domains span residues 22–89 (FVAK…VVAK), 90–170 (SIIS…INED), 173–259 (AKLA…VNEG), 262–341 (YDLR…VDAG), and 344–418 (LTVR…VKER).

The protein belongs to the BamA family. As to quaternary structure, part of the Bam complex.

The protein localises to the cell outer membrane. In terms of biological role, part of the outer membrane protein assembly complex, which is involved in assembly and insertion of beta-barrel proteins into the outer membrane. This chain is Outer membrane protein assembly factor BamA, found in Haemophilus influenzae.